Consider the following 362-residue polypeptide: 4-hydroxy-3-methylbut-2-en-1-yl diphosphate synthase (flavodoxin) (362 aa).

Cysteine 266, cysteine 269, cysteine 301, and glutamate 308 together coordinate [4Fe-4S] cluster.

Belongs to the IspG family. The cofactor is [4Fe-4S] cluster.

The enzyme catalyses (2E)-4-hydroxy-3-methylbut-2-enyl diphosphate + oxidized [flavodoxin] + H2O + 2 H(+) = 2-C-methyl-D-erythritol 2,4-cyclic diphosphate + reduced [flavodoxin]. It participates in isoprenoid biosynthesis; isopentenyl diphosphate biosynthesis via DXP pathway; isopentenyl diphosphate from 1-deoxy-D-xylulose 5-phosphate: step 5/6. Converts 2C-methyl-D-erythritol 2,4-cyclodiphosphate (ME-2,4cPP) into 1-hydroxy-2-methyl-2-(E)-butenyl 4-diphosphate. In Malacoplasma penetrans (strain HF-2) (Mycoplasma penetrans), this protein is 4-hydroxy-3-methylbut-2-en-1-yl diphosphate synthase (flavodoxin).